A 268-amino-acid chain; its full sequence is NADH-quinone oxidoreductase subunit B 2 (268 aa).

Residues cysteine 42, cysteine 43, cysteine 108, and cysteine 138 each contribute to the [4Fe-4S] cluster site. The interval 237–268 (SPNKAKGVAPEIRHNDLKRPAVEVDHARDEQR) is disordered. The span at 247 to 268 (EIRHNDLKRPAVEVDHARDEQR) shows a compositional bias: basic and acidic residues.

It belongs to the complex I 20 kDa subunit family. In terms of assembly, NDH-1 is composed of 14 different subunits. Subunits NuoB, C, D, E, F, and G constitute the peripheral sector of the complex. [4Fe-4S] cluster is required as a cofactor.

It is found in the cell membrane. It carries out the reaction a quinone + NADH + 5 H(+)(in) = a quinol + NAD(+) + 4 H(+)(out). Its function is as follows. NDH-1 shuttles electrons from NADH, via FMN and iron-sulfur (Fe-S) centers, to quinones in the respiratory chain. The immediate electron acceptor for the enzyme in this species is believed to be ubiquinone. Couples the redox reaction to proton translocation (for every two electrons transferred, four hydrogen ions are translocated across the cytoplasmic membrane), and thus conserves the redox energy in a proton gradient. The protein is NADH-quinone oxidoreductase subunit B 2 of Roseiflexus castenholzii (strain DSM 13941 / HLO8).